The primary structure comprises 531 residues: Apolipoprotein N-acyltransferase (531 aa).

The next 7 helical transmembrane spans lie at 8–28 (IILL…LLAV), 34–54 (FGIF…IDGV), 69–89 (PAAI…WWLG), 105–125 (LAVV…VVIA), 136–156 (IAAL…VFTG), 178–198 (VVNL…PALI), and 207–227 (GLAI…YRLA). The CN hydrolase domain occupies 243–493 (VQPVIDQAKK…RGVLDTILPG (251 aa)). The active-site Proton acceptor is Glu-287. Residue Lys-351 is part of the active site. Catalysis depends on Cys-405, which acts as the Nucleophile. Residues 507–527 (IFWLSMAILSIVASFSRFGFN) traverse the membrane as a helical segment.

The protein belongs to the CN hydrolase family. Apolipoprotein N-acyltransferase subfamily.

Its subcellular location is the cell inner membrane. It catalyses the reaction N-terminal S-1,2-diacyl-sn-glyceryl-L-cysteinyl-[lipoprotein] + a glycerophospholipid = N-acyl-S-1,2-diacyl-sn-glyceryl-L-cysteinyl-[lipoprotein] + a 2-acyl-sn-glycero-3-phospholipid + H(+). It functions in the pathway protein modification; lipoprotein biosynthesis (N-acyl transfer). In terms of biological role, catalyzes the phospholipid dependent N-acylation of the N-terminal cysteine of apolipoprotein, the last step in lipoprotein maturation. The protein is Apolipoprotein N-acyltransferase of Sinorhizobium medicae (strain WSM419) (Ensifer medicae).